Reading from the N-terminus, the 119-residue chain is Membrane-anchored ubiquitin-fold protein 6 (119 aa).

The region spanning 8-76 (IELKFRLADG…NNRTLAESRL (69 aa)) is the Ubiquitin-like domain. C114 carries S-palmitoyl cysteine lipidation. At C116 the chain carries Cysteine methyl ester. C116 carries the S-geranylgeranyl cysteine lipid modification. Residues 117–119 (TIL) constitute a propeptide, removed in mature form.

In terms of tissue distribution, ubiquitous.

Its subcellular location is the cell membrane. Functionally, may serve as docking site to facilitate the association of other proteins to the plasma membrane. In Arabidopsis thaliana (Mouse-ear cress), this protein is Membrane-anchored ubiquitin-fold protein 6 (MUB6).